Consider the following 497-residue polypeptide: MQNLNKTEKTFFGQPRGLLTLFQTEFWERFSYYGMRAILVYYLYALTTADNAGLGLPKAQAMAIVSIYGALVYLSTIVGGWVADRLLGASRTIFLGGILITLGHIALATPFGLSSLFVALFLIILGTGMLKPNISNMVGHLYSKDDSRRDTGFNIFVVGINMGSLIAPLIVGTVGQGVNYHLGFSLAAIGMIFALFAYWYGRLRHFPEIGREPSNPMDSKARRNFLITLTIVVIVAIIGFFLLYQASPANFINNFINVLSIIGIVVPIIYFVMMFTSKKVESDERRKLTAYIPLFLSAIVFWAIEEQSSTIIAVWGESRSNLDPTWFGITFHIDPSWYQLLNPLFIVLLSPIFVRLWNKLGERQPSTIVKFGLGLMLTGISYLIMTLPGLLNGTSGRASALWLVLMFAVQMAGELLVSPVGLSVSTKLAPVAFQSQMMAMWFLADSTSQAINAQITPLFKAATEVHFFAITGIIGIIVGIILLIVKKPILKLMGDVR.

At 1 to 36 (MQNLNKTEKTFFGQPRGLLTLFQTEFWERFSYYGMR) the chain is on the cytoplasmic side. A helical membrane pass occupies residues 37–55 (AILVYYLYALTTADNAGLG). Over 56–64 (LPKAQAMAI) the chain is Extracellular. A helical transmembrane segment spans residues 65–83 (VSIYGALVYLSTIVGGWVA). Residues 84–92 (DRLLGASRT) lie on the Cytoplasmic side of the membrane. Residues 93-111 (IFLGGILITLGHIALATPF) form a helical membrane-spanning segment. The Extracellular segment spans residues 112–115 (GLSS). The helical transmembrane segment at 116–134 (LFVALFLIILGTGMLKPNI) threads the bilayer. The Cytoplasmic portion of the chain corresponds to 135–154 (SNMVGHLYSKDDSRRDTGFN). The chain crosses the membrane as a helical span at residues 155–173 (IFVVGINMGSLIAPLIVGT). Over 174-181 (VGQGVNYH) the chain is Extracellular. Residues 182 to 200 (LGFSLAAIGMIFALFAYWY) traverse the membrane as a helical segment. The Cytoplasmic segment spans residues 201 to 224 (GRLRHFPEIGREPSNPMDSKARRN). The chain crosses the membrane as a helical span at residues 225 to 243 (FLITLTIVVIVAIIGFFLL). Topologically, residues 244-254 (YQASPANFINN) are extracellular. A helical transmembrane segment spans residues 255–273 (FINVLSIIGIVVPIIYFVM). Residues 274-293 (MFTSKKVESDERRKLTAYIP) are Cytoplasmic-facing. Residues 294 to 312 (LFLSAIVFWAIEEQSSTII) form a helical membrane-spanning segment. Over 313-335 (AVWGESRSNLDPTWFGITFHIDP) the chain is Extracellular. Residues 336 to 354 (SWYQLLNPLFIVLLSPIFV) traverse the membrane as a helical segment. Over 355–372 (RLWNKLGERQPSTIVKFG) the chain is Cytoplasmic. The helical transmembrane segment at 373–391 (LGLMLTGISYLIMTLPGLL) threads the bilayer. Over 392 to 425 (NGTSGRASALWLVLMFAVQMAGELLVSPVGLSVS) the chain is Extracellular. The helical transmembrane segment at 426 to 444 (TKLAPVAFQSQMMAMWFLA) threads the bilayer. Topologically, residues 445-497 (DSTSQAINAQITPLFKAATEVHFFAITGIIGIIVGIILLIVKKPILKLMGDVR) are cytoplasmic.

The protein belongs to the major facilitator superfamily. Proton-dependent oligopeptide transporter (POT/PTR) (TC 2.A.17) family.

It is found in the cell membrane. In terms of biological role, proton-dependent uptake of di- or tri-peptides. This is Di-/tripeptide transporter (dtpT) from Lactococcus lactis subsp. lactis (strain IL1403) (Streptococcus lactis).